Reading from the N-terminus, the 420-residue chain is UDP-N-acetylglucosamine 1-carboxyvinyltransferase (420 aa).

22–23 (KN) is a phosphoenolpyruvate binding site. Arg-91 contacts UDP-N-acetyl-alpha-D-glucosamine. Cys-115 functions as the Proton donor in the catalytic mechanism. Cys-115 carries the 2-(S-cysteinyl)pyruvic acid O-phosphothioketal modification. Residues 120–124 (RPVDL), 160–163 (KVSV), Asp-305, and Ile-327 each bind UDP-N-acetyl-alpha-D-glucosamine.

The protein belongs to the EPSP synthase family. MurA subfamily.

It localises to the cytoplasm. It carries out the reaction phosphoenolpyruvate + UDP-N-acetyl-alpha-D-glucosamine = UDP-N-acetyl-3-O-(1-carboxyvinyl)-alpha-D-glucosamine + phosphate. The protein operates within cell wall biogenesis; peptidoglycan biosynthesis. Cell wall formation. Adds enolpyruvyl to UDP-N-acetylglucosamine. In Erwinia tasmaniensis (strain DSM 17950 / CFBP 7177 / CIP 109463 / NCPPB 4357 / Et1/99), this protein is UDP-N-acetylglucosamine 1-carboxyvinyltransferase.